The following is a 1257-amino-acid chain: ATP-binding cassette sub-family B member 5 (1257 aa).

A disordered region spans residues 1-24 (MENSERAEEMQENYQRNGTAEEQP). Residue asparagine 17 is glycosylated (N-linked (GlcNAc...) asparagine). Residues 49–69 (ILGILASLVNGACLPLMPLVL) form a helical membrane-spanning segment. Positions 49–350 (ILGILASLVN…AAVPHFETFA (302 aa)) constitute an ABC transmembrane type-1 1 domain. 2 N-linked (GlcNAc...) asparagine glycosylation sites follow: asparagine 85 and asparagine 91. The next 5 membrane-spanning stretches (helical) occupy residues 110-130 (YVGI…LWII), 181-201 (KIAL…VGLV), 203-223 (GWKL…SAAA), 294-314 (VYFF…SLIL), and 322-342 (IGTV…IGAA). N-linked (GlcNAc...) asparagine glycans are attached at residues asparagine 371, asparagine 390, and asparagine 423. Positions 386-622 (VEFKNVSFNY…RGLYYSLVMS (237 aa)) constitute an ABC transporter 1 domain. 421-428 (GLNGSGKS) provides a ligand contact to ATP. A run of 2 helical transmembrane segments spans residues 693–713 (VLGT…SIIF) and 737–757 (MIFV…GLFY). The ABC transmembrane type-1 2 domain maps to 693 to 980 (VLGTLASVLN…TLVLAPEYSK (288 aa)). N-linked (GlcNAc...) asparagine glycosylation is found at asparagine 789 and asparagine 819. A helical transmembrane segment spans residues 827–847 (VIISFIYGWEMTFLILSIAPV). N-linked (GlcNAc...) asparagine glycosylation occurs at asparagine 910. Transmembrane regions (helical) follow at residues 917-937 (IIGS…AAGF) and 954-974 (MFIV…TLVL). Residues 1015–1253 (LEFREVSFFY…RDIYFKLVNA (239 aa)) form the ABC transporter 2 domain. 1050 to 1057 (GSSGCGKS) lines the ATP pocket. Asparagine 1104 and asparagine 1188 each carry an N-linked (GlcNAc...) asparagine glycan.

The protein belongs to the ABC transporter superfamily. ABCB family. Multidrug resistance exporter (TC 3.A.1.201) subfamily. Expressed by CD133-expressing progenitor cells among epidermal melanocytes (at protein level). Widely expressed with specific expression in pigment cells. Highly expressed in several malignant tissues: highly expressed in clinical melanomas, with low expression in normal skin. In melanoma, marks malignant melanoma-initiating cells (MMIC), in which clinical virulence resides as a consequence of unlimited self-renewal capacity, resulting in inexorable tumor progression and metastasis. Also highly expressed in a number of leukemia cells. Expressed in basal limbal epithelium.

It localises to the cell membrane. The catalysed reaction is daunorubicin(in) + ATP + H2O = daunorubicin(out) + ADP + phosphate + H(+). Its function is as follows. Energy-dependent efflux transporter responsible for decreased drug accumulation in multidrug-resistant cells. Specifically present in limbal stem cells, where it plays a key role in corneal development and repair. This is ATP-binding cassette sub-family B member 5 from Homo sapiens (Human).